The following is a 960-amino-acid chain: Testis anion transporter 1 (960 aa).

The Cytoplasmic portion of the chain corresponds to methionine 1–aspartate 93. Residues leucine 94–leucine 114 form a helical membrane-spanning segment. The Extracellular segment spans residues alanine 115 to histidine 117. Residues leucine 118–phenylalanine 138 form a helical membrane-spanning segment. Glycine 139 is a topological domain (cytoplasmic). The chain crosses the membrane as a helical span at residues serine 140–leucine 160. Residues arginine 161–leucine 201 are Extracellular-facing. Asparagine 190 is a glycosylation site (N-linked (GlcNAc...) asparagine). A run of 2 helical transmembrane segments spans residues leucine 202–isoleucine 222 and proline 223–leucine 243. The Cytoplasmic segment spans residues threonine 244–cysteine 268. A helical transmembrane segment spans residues leucine 269–leucine 289. Residues arginine 290 to threonine 353 are Extracellular-facing. A helical membrane pass occupies residues glutamate 354 to glycine 374. The Cytoplasmic segment spans residues lysine 375–aspartate 390. A helical membrane pass occupies residues leucine 391–glycine 411. The Extracellular portion of the chain corresponds to alanine 412–glutamine 427. Residues phenylalanine 428–phenylalanine 448 form a helical membrane-spanning segment. The Cytoplasmic portion of the chain corresponds to tyrosine 449–asparagine 453. A helical membrane pass occupies residues alanine 454 to leucine 474. At proline 475–serine 494 the chain is on the extracellular side. Residues alanine 495–isoleucine 515 form a helical membrane-spanning segment. The Cytoplasmic segment spans residues threonine 516–isoleucine 960. Residues aspartate 541–alanine 792 form the STAS domain. The tract at residues isoleucine 662–alanine 957 is interaction with RACGAP1. Disordered regions lie at residues glutamate 807–aspartate 857 and glutamate 881–isoleucine 960. Residues glutamate 818–histidine 827 are compositionally biased toward basic and acidic residues. Over residues proline 884 to proline 904 the composition is skewed to acidic residues. Residues serine 926 to glutamine 935 are compositionally biased toward polar residues.

This sequence belongs to the SLC26A/SulP transporter (TC 2.A.53) family. Interacts with RACGAP1. Interacts with CFTR; stimulates anion transport activity of CFTR. In terms of processing, N-glycosylated.

The protein localises to the membrane. The catalysed reaction is sulfate(out) + chloride(in) = sulfate(in) + chloride(out). The enzyme catalyses oxalate(in) + chloride(out) = oxalate(out) + chloride(in). Functionally, antiporter that mediates the exchange of sulfate and oxalate against chloride ions across a membrane. Stimulates anion transport activity of CFTR. May cooperate with CFTR in the regulation of chloride and bicarbonate ions fluxes required for activation of the ADCY10/PKA pathway during sperm motility and sperm capacitation. May play a role in sperm tail differentiation and motility and hence male fertility. In Bos taurus (Bovine), this protein is Testis anion transporter 1.